Here is a 476-residue protein sequence, read N- to C-terminus: Adenosylhomocysteinase (476 aa).

T65, D140, and E201 together coordinate substrate. An NAD(+)-binding site is contributed by 202–204 (TTT). Residues K231 and D235 each coordinate substrate. Residues N236, 265–270 (GYGDVG), E288, N323, 344–346 (IGH), and N392 each bind NAD(+).

The protein belongs to the adenosylhomocysteinase family. It depends on NAD(+) as a cofactor.

It is found in the cytoplasm. It carries out the reaction S-adenosyl-L-homocysteine + H2O = L-homocysteine + adenosine. Its pathway is amino-acid biosynthesis; L-homocysteine biosynthesis; L-homocysteine from S-adenosyl-L-homocysteine: step 1/1. In terms of biological role, may play a key role in the regulation of the intracellular concentration of adenosylhomocysteine. The chain is Adenosylhomocysteinase from Bacteroides thetaiotaomicron (strain ATCC 29148 / DSM 2079 / JCM 5827 / CCUG 10774 / NCTC 10582 / VPI-5482 / E50).